A 104-amino-acid chain; its full sequence is Flagellar hook-basal body complex protein FliE (104 aa).

It belongs to the FliE family.

The protein resides in the bacterial flagellum basal body. The polypeptide is Flagellar hook-basal body complex protein FliE (Salmonella typhi).